The primary structure comprises 233 residues: MSKDIPTPYMWSYQPQMGLAAGASQDYSSRMNWLSAGPHMIGRVNGIRATRNQILLEQAALTSTPRRQLNPPSWPAAQVYQENPAPTTVLLPRDAEAEVQMTNSGAQLAGGARHVRFRDRPSPYSSGSIKRLIIRGRGIQLNDEVVSSSTGPRPDGVFQLGGAGRSSFTPRQAYLTLQSSSSQPRSGGIGTLQFVEEFVPSVYFNPFSGAPGLYPDDFIPNYDAVSESVDGYD.

The residue at position 64 (T64) is a Phosphothreonine; by host. Positions 112 to 163 (ARHVRFRDRPSPYSSGSIKRLIIRGRGIQLNDEVVSSSTGPRPDGVFQLGGA) are excised as a propeptide. At S180 the chain carries Phosphoserine; by host.

It belongs to the adenoviridae hexon-linking protein family. As to quaternary structure, interacts with the peripentonal hexons as well as the hexons in the facets. Part of a complex composed of the core-capsid bridging protein, the endosome lysis protein VI and the hexon-linking protein VIII; these interactions bridge the virus core to the capsid. Post-translationally, cleaved by the viral protease during virion maturation. May cause the middle segment to be shed from the capsid.

It localises to the virion. The protein localises to the host nucleus. Functionally, structural component of the virion that acts as a cement protein on the capsid interior and which glue the peripentonal hexons and group-of-nine hexons together. This Homo sapiens (Human) protein is Pre-hexon-linking protein VIII.